We begin with the raw amino-acid sequence, 471 residues long: uncharacterized protein (471 aa).

12 consecutive transmembrane segments (helical) span residues 48–68 (FISA…FTIV), 85–105 (LSGV…YPML), 123–140 (YTMS…YALA), 145–165 (SVAL…MFLY), 186–206 (VVNS…GGLM), 223–243 (SGNW…FACF), 277–297 (FVGC…YFLL), 320–340 (GNFL…FSYL), 349–369 (IILL…TIHY), 379–399 (FIIY…SVSL), 414–434 (VAVQ…GGAF), and 440–460 (VVFF…LLII).

Belongs to the major facilitator superfamily.

Its subcellular location is the golgi apparatus. It localises to the membrane. This is an uncharacterized protein from Schizosaccharomyces pombe (strain 972 / ATCC 24843) (Fission yeast).